Reading from the N-terminus, the 182-residue chain is ATP-dependent protease subunit HslV (182 aa).

Residue threonine 12 is part of the active site. Residues alanine 167, cysteine 170, and threonine 173 each contribute to the Na(+) site.

Belongs to the peptidase T1B family. HslV subfamily. A double ring-shaped homohexamer of HslV is capped on each side by a ring-shaped HslU homohexamer. The assembly of the HslU/HslV complex is dependent on binding of ATP.

Its subcellular location is the cytoplasm. The catalysed reaction is ATP-dependent cleavage of peptide bonds with broad specificity.. With respect to regulation, allosterically activated by HslU binding. In terms of biological role, protease subunit of a proteasome-like degradation complex believed to be a general protein degrading machinery. This is ATP-dependent protease subunit HslV from Chlorobium limicola (strain DSM 245 / NBRC 103803 / 6330).